A 284-amino-acid polypeptide reads, in one-letter code: Bifunctional protein FolD (284 aa).

NADP(+) contacts are provided by residues 165-167 (GAS), S190, and I231.

Belongs to the tetrahydrofolate dehydrogenase/cyclohydrolase family. As to quaternary structure, homodimer.

The catalysed reaction is (6R)-5,10-methylene-5,6,7,8-tetrahydrofolate + NADP(+) = (6R)-5,10-methenyltetrahydrofolate + NADPH. It catalyses the reaction (6R)-5,10-methenyltetrahydrofolate + H2O = (6R)-10-formyltetrahydrofolate + H(+). Its pathway is one-carbon metabolism; tetrahydrofolate interconversion. Catalyzes the oxidation of 5,10-methylenetetrahydrofolate to 5,10-methenyltetrahydrofolate and then the hydrolysis of 5,10-methenyltetrahydrofolate to 10-formyltetrahydrofolate. The polypeptide is Bifunctional protein FolD (Polynucleobacter asymbioticus (strain DSM 18221 / CIP 109841 / QLW-P1DMWA-1) (Polynucleobacter necessarius subsp. asymbioticus)).